Here is a 433-residue protein sequence, read N- to C-terminus: V-type ATP synthase beta chain (433 aa).

The protein belongs to the ATPase alpha/beta chains family.

In terms of biological role, produces ATP from ADP in the presence of a proton gradient across the membrane. The V-type beta chain is a regulatory subunit. This Borrelia turicatae (strain 91E135) protein is V-type ATP synthase beta chain.